The following is a 362-amino-acid chain: GDSL esterase/lipase 6 (362 aa).

The N-terminal stretch at 1–23 (MSSSSSMDLLMCLLLLISPVVLA) is a signal peptide. The Nucleophile role is filled by serine 38. Asparagine 50, asparagine 103, asparagine 107, asparagine 195, and asparagine 296 each carry an N-linked (GlcNAc...) asparagine glycan. Residues aspartate 323 and histidine 326 contribute to the active site.

This sequence belongs to the 'GDSL' lipolytic enzyme family.

The protein resides in the secreted. This is GDSL esterase/lipase 6 (GLIP6) from Arabidopsis thaliana (Mouse-ear cress).